We begin with the raw amino-acid sequence, 352 residues long: Holliday junction branch migration complex subunit RuvB (352 aa).

The segment at 4 to 191 is large ATPase domain (RuvB-L); sequence TDKFSAPDRV…FGIVARLEFY (188 aa). Residues Leu-30, Arg-31, Gly-72, Lys-75, Thr-76, Thr-77, 138-140, Arg-181, Tyr-191, and Arg-228 contribute to the ATP site; that span reads EDY. Mg(2+) is bound at residue Thr-76. Positions 192 to 262 are small ATPAse domain (RuvB-S); that stretch reads TAEELARIVT…IADAALAMLD (71 aa). The interval 265–352 is head domain (RuvB-H); that stretch reads RVGFDLMDRK…GDSGDLIDGE (88 aa). The DNA site is built by Arg-301, Arg-320, and Arg-325.

This sequence belongs to the RuvB family. As to quaternary structure, homohexamer. Forms an RuvA(8)-RuvB(12)-Holliday junction (HJ) complex. HJ DNA is sandwiched between 2 RuvA tetramers; dsDNA enters through RuvA and exits via RuvB. An RuvB hexamer assembles on each DNA strand where it exits the tetramer. Each RuvB hexamer is contacted by two RuvA subunits (via domain III) on 2 adjacent RuvB subunits; this complex drives branch migration. In the full resolvosome a probable DNA-RuvA(4)-RuvB(12)-RuvC(2) complex forms which resolves the HJ.

It is found in the cytoplasm. It catalyses the reaction ATP + H2O = ADP + phosphate + H(+). Functionally, the RuvA-RuvB-RuvC complex processes Holliday junction (HJ) DNA during genetic recombination and DNA repair, while the RuvA-RuvB complex plays an important role in the rescue of blocked DNA replication forks via replication fork reversal (RFR). RuvA specifically binds to HJ cruciform DNA, conferring on it an open structure. The RuvB hexamer acts as an ATP-dependent pump, pulling dsDNA into and through the RuvAB complex. RuvB forms 2 homohexamers on either side of HJ DNA bound by 1 or 2 RuvA tetramers; 4 subunits per hexamer contact DNA at a time. Coordinated motions by a converter formed by DNA-disengaged RuvB subunits stimulates ATP hydrolysis and nucleotide exchange. Immobilization of the converter enables RuvB to convert the ATP-contained energy into a lever motion, pulling 2 nucleotides of DNA out of the RuvA tetramer per ATP hydrolyzed, thus driving DNA branch migration. The RuvB motors rotate together with the DNA substrate, which together with the progressing nucleotide cycle form the mechanistic basis for DNA recombination by continuous HJ branch migration. Branch migration allows RuvC to scan DNA until it finds its consensus sequence, where it cleaves and resolves cruciform DNA. The sequence is that of Holliday junction branch migration complex subunit RuvB from Cupriavidus pinatubonensis (strain JMP 134 / LMG 1197) (Cupriavidus necator (strain JMP 134)).